Consider the following 330-residue polypeptide: MISLESQVLERHISFFDGKSVLFAGGISDSFPQTLASKCSSIQIWSCYFDYARTQSAVNFSVEFQGQADLIVYYWTKNKQEVNFQLIQLLAQASIGQEILIIGENRCGVRSVEKTLSPYGEIAKIDSARRCGLYHFSLQNKPHFELKNFWRTYQHSTLENLTIYSLPGVFSAAELDTGTELLLSTIDNKIKGKVLDLGCGAGVIGSMIKKRTPNAQITMTDIHAMALESARKTLSENQLQGEVYASDVFSDIEGKFDLIISNPPFHDGIDTAYRAVTELITQAKWHLNQGGELRIVANSFLPYPELLRQHFNDYQVLAQTGKFKVYSVKN.

It belongs to the methyltransferase superfamily. RsmC family. As to quaternary structure, monomer.

Its subcellular location is the cytoplasm. It catalyses the reaction guanosine(1207) in 16S rRNA + S-adenosyl-L-methionine = N(2)-methylguanosine(1207) in 16S rRNA + S-adenosyl-L-homocysteine + H(+). Specifically methylates the guanine in position 1207 of 16S rRNA in the 30S particle. In Haemophilus influenzae (strain ATCC 51907 / DSM 11121 / KW20 / Rd), this protein is Ribosomal RNA small subunit methyltransferase C.